Reading from the N-terminus, the 500-residue chain is Protein FAM114A2 (500 aa).

Positions 1 to 82 are disordered; sequence MSNKDDLETA…AAGKETVSKD (82 aa). 3 positions are modified to phosphoserine: serine 93, serine 152, and serine 215.

It belongs to the FAM114 family.

The protein is Protein FAM114A2 (FAM114A1) of Bos taurus (Bovine).